The following is a 168-amino-acid chain: Secreted RxLR effector protein RXLR-C06 (168 aa).

The signal sequence occupies residues 1 to 22; the sequence is MRIQLLWLSFAVLSTILSTCDA. Residues 25-52 are disordered; the sequence is DKLDPQRVQPNQNGSGHNQSIRSALKTS. The span at 32–50 shows a compositional bias: polar residues; the sequence is VQPNQNGSGHNQSIRSALK. 2 N-linked (GlcNAc...) asparagine glycosylation sites follow: Asn37 and Asn42. The RxLR-dEER motif lies at 46–63; the sequence is RSALKTSHGKTIADDEER. The region spanning 78–107 is the IQ domain; the sequence is YKAIVAKLSKYFRDYHERREIRKQRILNKS. The N-linked (GlcNAc...) asparagine glycan is linked to Asn105.

This sequence belongs to the RxLR effector family.

The protein localises to the secreted. The protein resides in the host Golgi apparatus. Secreted effector that suppresses pattern-triggered immunity (PTI) in plant host. In Plasmopara halstedii (Downy mildew of sunflower), this protein is Secreted RxLR effector protein RXLR-C06.